Here is a 276-residue protein sequence, read N- to C-terminus: Large ribosomal subunit protein uL2 (276 aa).

Disordered stretches follow at residues 1 to 20 (MGIKKYNPTTNGRRNMTTND) and 219 to 276 (TVRG…RRKK). Positions 7–20 (NPTTNGRRNMTTND) are enriched in polar residues.

The protein belongs to the universal ribosomal protein uL2 family. In terms of assembly, part of the 50S ribosomal subunit. Forms a bridge to the 30S subunit in the 70S ribosome.

Functionally, one of the primary rRNA binding proteins. Required for association of the 30S and 50S subunits to form the 70S ribosome, for tRNA binding and peptide bond formation. It has been suggested to have peptidyltransferase activity; this is somewhat controversial. Makes several contacts with the 16S rRNA in the 70S ribosome. In Bacillus anthracis (strain A0248), this protein is Large ribosomal subunit protein uL2.